The following is a 147-amino-acid chain: 3-dehydroquinate dehydratase (147 aa).

Tyr24 acts as the Proton acceptor in catalysis. 3 residues coordinate substrate: Asn73, His79, and Asp86. Residue His99 is the Proton donor of the active site. Substrate is bound by residues 100-101 (LS) and Arg110.

This sequence belongs to the type-II 3-dehydroquinase family. As to quaternary structure, homododecamer.

The enzyme catalyses 3-dehydroquinate = 3-dehydroshikimate + H2O. It participates in metabolic intermediate biosynthesis; chorismate biosynthesis; chorismate from D-erythrose 4-phosphate and phosphoenolpyruvate: step 3/7. Functionally, catalyzes a trans-dehydration via an enolate intermediate. This is 3-dehydroquinate dehydratase from Hyphomonas neptunium (strain ATCC 15444).